A 69-amino-acid polypeptide reads, in one-letter code: uncharacterized protein (69 aa).

Residues 22–48 (LFRKSRELSPIKPVRTPTPPAPTPPPM) are disordered. Residues 37–48 (TPTPPAPTPPPM) are compositionally biased toward pro residues.

This is an uncharacterized protein from Lepidoptera (butterflies and moths).